The sequence spans 141 residues: Lysozyme P (141 aa).

The signal sequence occupies residues methionine 1–glutamine 18. Residues arginine 20 to phenylalanine 141 form the C-type lysozyme domain. Cystine bridges form between cysteine 25/cysteine 140, cysteine 46/cysteine 130, cysteine 81/cysteine 97, and cysteine 93/cysteine 111. Residues glutamate 51 and aspartate 69 contribute to the active site.

Belongs to the glycosyl hydrolase 22 family. As to expression, salivary gland.

It catalyses the reaction Hydrolysis of (1-&gt;4)-beta-linkages between N-acetylmuramic acid and N-acetyl-D-glucosamine residues in a peptidoglycan and between N-acetyl-D-glucosamine residues in chitodextrins.. Unlikely to play an active role in the humoral immune defense. May have a function in the digestion of bacteria in the food. The protein is Lysozyme P (LysP) of Drosophila melanogaster (Fruit fly).